Consider the following 254-residue polypeptide: Thiazole synthase (254 aa).

The active-site Schiff-base intermediate with DXP is Lys-96. 1-deoxy-D-xylulose 5-phosphate is bound by residues Gly-157, Ala-183–Gly-184, and Asn-205–Thr-206.

Belongs to the ThiG family. As to quaternary structure, homotetramer. Forms heterodimers with either ThiH or ThiS.

The protein resides in the cytoplasm. It carries out the reaction [ThiS sulfur-carrier protein]-C-terminal-Gly-aminoethanethioate + 2-iminoacetate + 1-deoxy-D-xylulose 5-phosphate = [ThiS sulfur-carrier protein]-C-terminal Gly-Gly + 2-[(2R,5Z)-2-carboxy-4-methylthiazol-5(2H)-ylidene]ethyl phosphate + 2 H2O + H(+). It functions in the pathway cofactor biosynthesis; thiamine diphosphate biosynthesis. Functionally, catalyzes the rearrangement of 1-deoxy-D-xylulose 5-phosphate (DXP) to produce the thiazole phosphate moiety of thiamine. Sulfur is provided by the thiocarboxylate moiety of the carrier protein ThiS. In vitro, sulfur can be provided by H(2)S. This Clostridium kluyveri (strain ATCC 8527 / DSM 555 / NBRC 12016 / NCIMB 10680 / K1) protein is Thiazole synthase.